Reading from the N-terminus, the 1390-residue chain is Hepatocyte growth factor receptor (1390 aa).

An N-terminal signal peptide occupies residues methionine 1–glycine 24. Residues glutamate 25–threonine 932 lie on the Extracellular side of the membrane. A Sema domain is found at lysine 27 to leucine 515. A glycan (N-linked (GlcNAc...) asparagine) is linked at asparagine 45. Cystine bridges form between cysteine 95-cysteine 101, cysteine 98-cysteine 160, cysteine 133-cysteine 141, and cysteine 172-cysteine 175. Asparagine 106 carries an N-linked (GlcNAc...) asparagine glycan. Asparagine 149 is a glycosylation site (N-linked (GlcNAc...) asparagine). N-linked (GlcNAc...) asparagine glycosylation is present at asparagine 202. Cystine bridges form between cysteine 298–cysteine 363 and cysteine 385–cysteine 397. N-linked (GlcNAc...) asparagine glycosylation is found at asparagine 399 and asparagine 405. Disulfide bonds link cysteine 520–cysteine 538, cysteine 526–cysteine 561, cysteine 529–cysteine 545, and cysteine 541–cysteine 551. IPT/TIG domains lie at proline 563–valine 655, proline 657–arginine 739, and proline 742–valine 836. An O-linked (Man) threonine glycan is attached at threonine 582. Asparagine 607 and asparagine 635 each carry an N-linked (GlcNAc...) asparagine glycan. Residues threonine 676 and threonine 761 are each glycosylated (O-linked (Man) threonine). Asparagine 785, asparagine 879, and asparagine 930 each carry an N-linked (GlcNAc...) asparagine glycan. The helical transmembrane segment at glycine 933–leucine 955 threads the bilayer. Residues lysine 956–serine 1390 lie on the Cytoplasmic side of the membrane. Residue serine 966 is modified to Phosphoserine. Threonine 977 is subject to Phosphothreonine. 3 positions are modified to phosphoserine: serine 990, serine 997, and serine 1000. A Phosphotyrosine modification is found at tyrosine 1003. In terms of domain architecture, Protein kinase spans valine 1078 to isoleucine 1345. ATP-binding positions include isoleucine 1084–valine 1092 and lysine 1110. The Proton acceptor role is filled by aspartate 1204. The interval leucine 1212–threonine 1381 is interaction with RANBP9. At tyrosine 1230 the chain carries Phosphotyrosine. Phosphotyrosine; by autocatalysis is present on residues tyrosine 1234 and tyrosine 1235. Threonine 1289 carries the post-translational modification Phosphothreonine. Positions tryptophan 1320–valine 1359 are interaction with MUC20. Phosphotyrosine; by autocatalysis is present on residues tyrosine 1349 and tyrosine 1356. Tyrosine 1365 is subject to Phosphotyrosine.

It belongs to the protein kinase superfamily. Tyr protein kinase family. Heterodimer made of an alpha chain (50 kDa) and a beta chain (145 kDa) which are disulfide linked. Binds PLXNB1. Interacts when phosphorylated with downstream effectors including STAT3, PIK3R1, SRC, PCLG1, GRB2 and GAB1. Interacts with SPSB1, SPSB2 and SPSB4. Interacts with INPP5D/SHIP1. When phosphorylated at Tyr-1356, interacts with INPPL1/SHIP2. Interacts with RANBP9 and RANBP10, as well as SPSB1, SPSB2, SPSB3 and SPSB4. SPSB1 binding occurs in the presence and in the absence of HGF, however HGF treatment has a positive effect on this interaction. Interacts with MUC20; prevents interaction with GRB2 and suppresses hepatocyte growth factor-induced cell proliferation. Interacts with GRB10. Interacts with PTPN1 and PTPN2. Interacts with HSP90AA1 and HSP90AB1; the interaction suppresses MET kinase activity. Interacts with tensin TNS3. Interacts (when phosphorylated) with tensin TNS4 (via SH2 domain); the interaction increases MET protein stability by inhibiting MET endocytosis and subsequent lysosomal degradation. Autophosphorylated in response to ligand binding on Tyr-1234 and Tyr-1235 in the kinase domain leading to further phosphorylation of Tyr-1349 and Tyr-1356 in the C-terminal multifunctional docking site. Dephosphorylated by PTPRJ at Tyr-1349 and Tyr-1365. Dephosphorylated by PTPN1 and PTPN2. In terms of processing, ubiquitinated. Ubiquitination by CBL regulates the receptor stability and activity through proteasomal degradation. Post-translationally, O-mannosylation of IPT/TIG domains by TMEM260 is required for protein maturation. O-mannosylated residues are composed of single mannose glycans that are not elongated or modified.

The protein localises to the membrane. It carries out the reaction L-tyrosyl-[protein] + ATP = O-phospho-L-tyrosyl-[protein] + ADP + H(+). With respect to regulation, in its inactive state, the C-terminal tail interacts with the catalytic domain and inhibits the kinase activity. Upon ligand binding, the C-terminal tail is displaced and becomes phosphorylated, thus increasing the kinase activity. Functionally, receptor tyrosine kinase that transduces signals from the extracellular matrix into the cytoplasm by binding to hepatocyte growth factor/HGF ligand. Regulates many physiological processes including proliferation, scattering, morphogenesis and survival. Ligand binding at the cell surface induces autophosphorylation of MET on its intracellular domain that provides docking sites for downstream signaling molecules. Following activation by ligand, interacts with the PI3-kinase subunit PIK3R1, PLCG1, SRC, GRB2, STAT3 or the adapter GAB1. Recruitment of these downstream effectors by MET leads to the activation of several signaling cascades including the RAS-ERK, PI3 kinase-AKT, or PLCgamma-PKC. The RAS-ERK activation is associated with the morphogenetic effects while PI3K/AKT coordinates prosurvival effects. During embryonic development, MET signaling plays a role in gastrulation, development and migration of muscles and neuronal precursors, angiogenesis and kidney formation. In adults, participates in wound healing as well as organ regeneration and tissue remodeling. Also promotes differentiation and proliferation of hematopoietic cells. This chain is Hepatocyte growth factor receptor (MET), found in Nomascus leucogenys (Northern white-cheeked gibbon).